We begin with the raw amino-acid sequence, 247 residues long: Malonyl-[acyl-carrier protein] O-methyltransferase (247 aa).

This sequence belongs to the methyltransferase superfamily.

The catalysed reaction is malonyl-[ACP] + S-adenosyl-L-methionine = malonyl-[ACP] methyl ester + S-adenosyl-L-homocysteine. It participates in cofactor biosynthesis; biotin biosynthesis. Converts the free carboxyl group of a malonyl-thioester to its methyl ester by transfer of a methyl group from S-adenosyl-L-methionine (SAM). It allows to synthesize pimeloyl-ACP via the fatty acid synthetic pathway. This Buchnera aphidicola subsp. Baizongia pistaciae (strain Bp) protein is Malonyl-[acyl-carrier protein] O-methyltransferase.